The following is a 62-amino-acid chain: U-myrmeciitoxin(01)-Mg3a (62 aa).

The signal sequence occupies residues 1–24 (MKTTVILLLAIAIIFAIMTTLTSA).

Expressed by the venom gland.

It localises to the secreted. Its function is as follows. May have antimicrobial properties, like most ant linear peptides. The sequence is that of U-myrmeciitoxin(01)-Mg3a from Myrmecia gulosa (Red bulldog ant).